The chain runs to 1299 residues: DNA-directed RNA polymerase subunit beta' (1299 aa).

Residues cysteine 60, cysteine 62, cysteine 75, and cysteine 78 each coordinate Zn(2+). Residues 188–209 (GAKSDQKRRAKDGAEKEMGQTR) are disordered. Aspartate 535, aspartate 537, and aspartate 539 together coordinate Mg(2+). Residues cysteine 882, cysteine 959, cysteine 966, and cysteine 969 each contribute to the Zn(2+) site.

This sequence belongs to the RNA polymerase beta' chain family. In terms of assembly, the RNAP catalytic core consists of 2 alpha, 1 beta, 1 beta' and 1 omega subunit. When a sigma factor is associated with the core the holoenzyme is formed, which can initiate transcription. Requires Mg(2+) as cofactor. It depends on Zn(2+) as a cofactor.

It catalyses the reaction RNA(n) + a ribonucleoside 5'-triphosphate = RNA(n+1) + diphosphate. Its function is as follows. DNA-dependent RNA polymerase catalyzes the transcription of DNA into RNA using the four ribonucleoside triphosphates as substrates. This chain is DNA-directed RNA polymerase subunit beta', found in Clavibacter sepedonicus (Clavibacter michiganensis subsp. sepedonicus).